The primary structure comprises 387 residues: Ferrochelatase (387 aa).

Positions 196 and 277 each coordinate Fe cation.

This sequence belongs to the ferrochelatase family.

The protein resides in the cytoplasm. The catalysed reaction is heme b + 2 H(+) = protoporphyrin IX + Fe(2+). Its pathway is porphyrin-containing compound metabolism; protoheme biosynthesis; protoheme from protoporphyrin-IX: step 1/1. Its function is as follows. Catalyzes the ferrous insertion into protoporphyrin IX. The polypeptide is Ferrochelatase (Trichodesmium erythraeum (strain IMS101)).